A 140-amino-acid polypeptide reads, in one-letter code: uncharacterized protein (140 aa).

This is an uncharacterized protein from Caenorhabditis elegans.